The primary structure comprises 622 residues: 1,4-alpha-glucan branching enzyme GlgB (622 aa).

Asp300 acts as the Nucleophile in catalysis. Glu351 (proton donor) is an active-site residue.

It belongs to the glycosyl hydrolase 13 family. GlgB subfamily. As to quaternary structure, monomer.

The catalysed reaction is Transfers a segment of a (1-&gt;4)-alpha-D-glucan chain to a primary hydroxy group in a similar glucan chain.. The protein operates within glycan biosynthesis; glycogen biosynthesis. In terms of biological role, catalyzes the formation of the alpha-1,6-glucosidic linkages in glycogen by scission of a 1,4-alpha-linked oligosaccharide from growing alpha-1,4-glucan chains and the subsequent attachment of the oligosaccharide to the alpha-1,6 position. This Streptococcus agalactiae serotype III (strain NEM316) protein is 1,4-alpha-glucan branching enzyme GlgB.